The chain runs to 274 residues: Non-homologous end joining protein Ku (274 aa).

The Ku domain occupies 11 to 195 (ITFGLVNVPV…KYKITPKELS (185 aa)).

Belongs to the prokaryotic Ku family. As to quaternary structure, homodimer. Interacts with LigD.

With LigD forms a non-homologous end joining (NHEJ) DNA repair enzyme, which repairs dsDNA breaks with reduced fidelity. Binds linear dsDNA with 5'- and 3'- overhangs but not closed circular dsDNA nor ssDNA. Recruits and stimulates the ligase activity of LigD. The protein is Non-homologous end joining protein Ku of Coxiella burnetii (strain RSA 331 / Henzerling II).